Here is a 100-residue protein sequence, read N- to C-terminus: Cell division topological specificity factor (100 aa).

Belongs to the MinE family.

In terms of biological role, prevents the cell division inhibition by proteins MinC and MinD at internal division sites while permitting inhibition at polar sites. This ensures cell division at the proper site by restricting the formation of a division septum at the midpoint of the long axis of the cell. This is Cell division topological specificity factor from Synechococcus sp. (strain JA-2-3B'a(2-13)) (Cyanobacteria bacterium Yellowstone B-Prime).